Reading from the N-terminus, the 236-residue chain is uncharacterized protein (236 aa).

Residues 1 to 69 (MLKYQQIATE…RGSGIFVRKH (69 aa)) enclose the HTH gntR-type domain. The segment at residues 29 to 48 (LETLMAQFEVSKSTITKSLE) is a DNA-binding region (H-T-H motif).

This is an uncharacterized protein from Bacillus subtilis (strain 168).